A 185-amino-acid chain; its full sequence is Peptide deformylase (185 aa).

Residues Cys98 and His140 each contribute to the Fe cation site. Residue Glu141 is part of the active site. His144 lines the Fe cation pocket.

This sequence belongs to the polypeptide deformylase family. It depends on Fe(2+) as a cofactor.

It carries out the reaction N-terminal N-formyl-L-methionyl-[peptide] + H2O = N-terminal L-methionyl-[peptide] + formate. In terms of biological role, removes the formyl group from the N-terminal Met of newly synthesized proteins. Requires at least a dipeptide for an efficient rate of reaction. N-terminal L-methionine is a prerequisite for activity but the enzyme has broad specificity at other positions. The sequence is that of Peptide deformylase from Parabacteroides distasonis (strain ATCC 8503 / DSM 20701 / CIP 104284 / JCM 5825 / NCTC 11152).